The following is a 588-amino-acid chain: Ribonuclease Y (588 aa).

The helical transmembrane segment at 7–27 threads the bilayer; sequence VLLVAVLLLTVVVVGAVLVGV. The region spanning 278–359 is the KH domain; sequence VVSVLHLPGD…HRIEEVHDLA (82 aa). One can recognise an HD domain in the interval 404–497; sequence VLKHLVESAH…TQASDACSGG (94 aa).

The protein belongs to the RNase Y family.

It is found in the cell membrane. Functionally, endoribonuclease that initiates mRNA decay. The chain is Ribonuclease Y from Salinispora tropica (strain ATCC BAA-916 / DSM 44818 / JCM 13857 / NBRC 105044 / CNB-440).